A 184-amino-acid polypeptide reads, in one-letter code: UPF0316 protein BLi00691/BL01474 (184 aa).

3 helical membrane passes run 9 to 29 (GVIMVGIILVINIIYVTFLTL), 41 to 61 (LAAFIGTIEMLVYVVGLGLVL), and 67 to 87 (IQNVIAYAVGFGIGIIVGTKI).

The protein belongs to the UPF0316 family.

Its subcellular location is the cell membrane. This is UPF0316 protein BLi00691/BL01474 from Bacillus licheniformis (strain ATCC 14580 / DSM 13 / JCM 2505 / CCUG 7422 / NBRC 12200 / NCIMB 9375 / NCTC 10341 / NRRL NRS-1264 / Gibson 46).